Consider the following 544-residue polypeptide: Cytochrome P450 monooxygenase cle2 (544 aa).

Residues 19 to 39 form a helical membrane-spanning segment; it reads LGLLIGLSLILSITWTAYTIL. Residues 273 to 305 are disordered; sequence RTQQVEQSIEKNTKNEKKEDEDEDQNEDEETPG. A compositionally biased stretch (basic and acidic residues) spans 280-290; it reads SIEKNTKNEKK. Residues 291–304 are compositionally biased toward acidic residues; it reads EDEDEDQNEDEETP. Residue Cys478 coordinates heme.

It belongs to the cytochrome P450 family. It depends on heme as a cofactor.

It is found in the membrane. Its pathway is secondary metabolite biosynthesis; terpenoid biosynthesis. In terms of biological role, cytochrome P450 monooxygenase; part of the cluster A that mediates the biosynthesis of chevalone E and its oxidized derivatives that possess a unique five-membered lactone ring and can synergistically enhance the cytotoxicity of doxorubicin (DOX) in breast cancer cells. Within the pathway, cle2 is involved in hydroxylation of the chavalone E scaffold at position C-20 and contributes with cle4 to the production of seven oxidation derivatives. The molecular scaffold is commonly biosynthesized by a series of enzymes including the non-reducing polyketide synthase (NR-PKS) cle1 that produces the alpha-pyrone triacetic acid lactone (TAL); The membrane-bound prenyltransferase cle5 that accepts TAL as its substrate to perform a C-3 geranylgeranylation reaction, in which the pathway-dedicated GGPS cle6 is required to provide GGPP, the other substrate of cle5; the FAD-dependent monooxygenase Cle3 that forms an (S)-epoxide ring at the terminal olefin of the geranylgeranyl group; and the terpene cyclase Cle7 that catalyzes the cyclization of the prenyl group that yields the pentacyclic pathway intermediate chevalone E. Chevalone E can derivatize into seven new oxidized analogs by the cytochrome P450 monooxygenases cle2 (acting at C-20) and cle4 (acting at C-11 and C-12). The sequence is that of Cytochrome P450 monooxygenase cle2 from Aspergillus versicolor.